Consider the following 310-residue polypeptide: Methionyl-tRNA formyltransferase (310 aa).

111-114 (SLLP) provides a ligand contact to (6S)-5,6,7,8-tetrahydrofolate.

This sequence belongs to the Fmt family.

The enzyme catalyses L-methionyl-tRNA(fMet) + (6R)-10-formyltetrahydrofolate = N-formyl-L-methionyl-tRNA(fMet) + (6S)-5,6,7,8-tetrahydrofolate + H(+). In terms of biological role, attaches a formyl group to the free amino group of methionyl-tRNA(fMet). The formyl group appears to play a dual role in the initiator identity of N-formylmethionyl-tRNA by promoting its recognition by IF2 and preventing the misappropriation of this tRNA by the elongation apparatus. This is Methionyl-tRNA formyltransferase from Rhodopseudomonas palustris (strain BisB18).